The following is a 401-amino-acid chain: Adenosine 3'-phospho 5'-phosphosulfate transporter 2 (401 aa).

2 N-linked (GlcNAc...) asparagine glycosylation sites follow: Asn12 and Asn71. 6 consecutive transmembrane segments (helical) span residues 78 to 98 (LTQFFICVAGVFVFYLIYGYL), 111 to 131 (YGWYLTLVQFAFYSIFGLIEL), 147 to 167 (MIIAFLTVGTMGLSNTSLGYL), 170 to 190 (PTQVIFKCCKLIPVMLGGVFI), 200 to 220 (VSAAICMSLGLIWFTLADSTI), and 223 to 243 (NFNLTGVVLISLALCADAVIG). Residue Asn254 is glycosylated (N-linked (GlcNAc...) asparagine). Transmembrane regions (helical) follow at residues 267–287 (IGFVYILLGLTCTSGLGPAVT), 298–317 (GYAFLFSLTGYFGISFVLAL), 324–346 (LIAVTVTTGRKAMTIVLSFIFFA), and 349–369 (FTFQYVWSGLLVFLGIFLNVY).

This sequence belongs to the nucleotide-sugar transporter family. SLC35B subfamily.

Its subcellular location is the golgi apparatus membrane. It catalyses the reaction 3'-phosphoadenylyl sulfate(in) + adenosine 3',5'-bisphosphate(out) = 3'-phosphoadenylyl sulfate(out) + adenosine 3',5'-bisphosphate(in). In terms of biological role, probably functions as a 3'-phosphoadenylyl sulfate:adenosine 3',5'-bisphosphate antiporter at the Golgi membranes. Mediates the transport from the cytosol into the lumen of the Golgi of 3'-phosphoadenylyl sulfate/adenosine 3'-phospho 5'-phosphosulfate (PAPS), a universal sulfuryl donor for sulfation events that take place in that compartment. This Pongo abelii (Sumatran orangutan) protein is Adenosine 3'-phospho 5'-phosphosulfate transporter 2.